We begin with the raw amino-acid sequence, 20 residues long: 54 kDa cell wall protein (20 aa).

Positions 1-20 (KVPVDDQFRRVNNGGATDTR) are disordered.

The protein localises to the secreted. It is found in the cell wall. This is 54 kDa cell wall protein from Arabidopsis thaliana (Mouse-ear cress).